The following is a 193-amino-acid chain: Putative manganese efflux pump MntP (193 aa).

6 helical membrane-spanning segments follow: residues 6-26, 41-61, 65-85, 107-127, 132-152, and 169-189; these read LLGL…AVGI, YHFG…GTGI, TQSY…ANMI, LIIL…SLSM, IWYP…FGML, and VLGG…NGVF.

It belongs to the MntP (TC 9.B.29) family.

Its subcellular location is the cell inner membrane. Probably functions as a manganese efflux pump. The polypeptide is Putative manganese efflux pump MntP (Desulfotalea psychrophila (strain LSv54 / DSM 12343)).